The primary structure comprises 316 residues: Probable cobalamin biosynthesis protein CobD (316 aa).

Helical transmembrane passes span 1–21 (MITEIFPFSVLILALLIDIVL), 50–70 (ISGMIISVLVISGAVLAGFAL), 89–109 (ILALIISSYLLKSTFAFKSLI), 165–185 (PLFYYVLFSCAGLGVEAALAF), and 294–314 (ISLIGRAMVLAALLSALLLIL).

The protein belongs to the CobD/CbiB family.

The protein localises to the cell membrane. It participates in cofactor biosynthesis; adenosylcobalamin biosynthesis. Converts cobyric acid to cobinamide by the addition of aminopropanol on the F carboxylic group. The polypeptide is Probable cobalamin biosynthesis protein CobD (Methanothrix thermoacetophila (strain DSM 6194 / JCM 14653 / NBRC 101360 / PT) (Methanosaeta thermophila)).